A 425-amino-acid chain; its full sequence is tRNA(Ile)-lysidine synthase (425 aa).

An ATP-binding site is contributed by 27 to 32 (SGGLDS).

This sequence belongs to the tRNA(Ile)-lysidine synthase family.

It is found in the cytoplasm. It catalyses the reaction cytidine(34) in tRNA(Ile2) + L-lysine + ATP = lysidine(34) in tRNA(Ile2) + AMP + diphosphate + H(+). Ligates lysine onto the cytidine present at position 34 of the AUA codon-specific tRNA(Ile) that contains the anticodon CAU, in an ATP-dependent manner. Cytidine is converted to lysidine, thus changing the amino acid specificity of the tRNA from methionine to isoleucine. This is tRNA(Ile)-lysidine synthase from Streptococcus sanguinis (strain SK36).